Reading from the N-terminus, the 425-residue chain is Type I restriction enzyme MjaVII specificity subunit (425 aa).

Residues 9 to 168 (KKTEIGEIPE…KSFKIPLPPL (160 aa)) are target recognition domain 1. Residues 169–208 (EEQKQIAKILTKIDEGIEIIEKSINKLERIKKGLMHKLLT) form a central conserved region (CCR) region. Positions 169 to 208 (EEQKQIAKILTKIDEGIEIIEKSINKLERIKKGLMHKLLT) form a coiled coil. The target recognition domain 2 stretch occupies residues 209-368 (KGIGHSRFKK…TFKELSKSML (160 aa)). Residues 369 to 418 (ENFKIPLPPLEEQKQIAKILSSVDKSIELKKQKKEKLQRMKKKIMELLLT) are a coiled coil. Residues 369 to 418 (ENFKIPLPPLEEQKQIAKILSSVDKSIELKKQKKEKLQRMKKKIMELLLT) form a distal conserved region (DCR) region.

The protein belongs to the type-I restriction system S methylase family. As to quaternary structure, the type I restriction/modification system is composed of three polypeptides R, M and S.

Its function is as follows. The specificity (S) subunit of a type I restriction enzyme; this subunit dictates DNA sequence specificity. The M and S subunits together form a methyltransferase (MTase) that methylates A-3 on the top and bottom strands of the sequence 5'-CAAN(7)TGG-3'. In the presence of the R subunit the complex can also act as an endonuclease, binding to the same target sequence but cutting the DNA some distance from this site. Whether the DNA is cut or modified depends on the methylation state of the target sequence. When the target site is unmodified, the DNA is cut. When the target site is hemimethylated, the complex acts as a maintenance MTase modifying the DNA so that both strands become methylated. After locating a non-methylated recognition site, the enzyme complex serves as a molecular motor that translocates DNA in an ATP-dependent manner until a collision occurs that triggers cleavage. This is Type I restriction enzyme MjaVII specificity subunit from Methanocaldococcus jannaschii (strain ATCC 43067 / DSM 2661 / JAL-1 / JCM 10045 / NBRC 100440) (Methanococcus jannaschii).